Reading from the N-terminus, the 310-residue chain is Glutaminase (310 aa).

Substrate is bound by residues Ser66, Asn117, Glu161, Asn168, Tyr192, Tyr244, and Val262.

Belongs to the glutaminase family. In terms of assembly, homotetramer.

It carries out the reaction L-glutamine + H2O = L-glutamate + NH4(+). This Desulfovibrio desulfuricans (strain ATCC 27774 / DSM 6949 / MB) protein is Glutaminase.